A 107-amino-acid chain; its full sequence is Heme-degrading monooxygenase (107 aa).

The 93-residue stretch at 2–94 (IIVTNTAKIT…YILDNKIAYY (93 aa)) folds into the ABM domain. A Fe cation-binding site is contributed by Asn6. His76 contacts heme.

Belongs to the antibiotic biosynthesis monooxygenase family. Heme-degrading monooxygenase IsdG subfamily. In terms of assembly, homodimer.

Its subcellular location is the cytoplasm. It carries out the reaction heme b + 3 reduced [NADPH--hemoprotein reductase] + 3 O2 = biliverdin IXalpha + CO + Fe(2+) + 3 oxidized [NADPH--hemoprotein reductase] + 3 H2O + H(+). Its function is as follows. Allows bacterial pathogens to use the host heme as an iron source. Catalyzes the oxidative degradation of the heme macrocyclic porphyrin ring to the biliverdin in the presence of a suitable electron donor such as ascorbate or NADPH--cytochrome P450 reductase, with subsequent release of free iron. The sequence is that of Heme-degrading monooxygenase from Bacillus cereus (strain ATCC 14579 / DSM 31 / CCUG 7414 / JCM 2152 / NBRC 15305 / NCIMB 9373 / NCTC 2599 / NRRL B-3711).